A 495-amino-acid chain; its full sequence is Glucose-6-phosphate 1-dehydrogenase (495 aa).

Residues glycine 11 to lysine 18, arginine 45, aspartate 84 to valine 85, and lysine 147 each bind NADP(+). Substrate contacts are provided by histidine 177, lysine 181, glutamate 215, and aspartate 234. Histidine 239 serves as the catalytic Proton acceptor. Positions 339 and 344 each coordinate substrate.

The protein belongs to the glucose-6-phosphate dehydrogenase family.

It carries out the reaction D-glucose 6-phosphate + NADP(+) = 6-phospho-D-glucono-1,5-lactone + NADPH + H(+). The protein operates within carbohydrate degradation; pentose phosphate pathway; D-ribulose 5-phosphate from D-glucose 6-phosphate (oxidative stage): step 1/3. Catalyzes the oxidation of glucose 6-phosphate to 6-phosphogluconolactone. The protein is Glucose-6-phosphate 1-dehydrogenase of Streptococcus pneumoniae serotype 4 (strain ATCC BAA-334 / TIGR4).